Here is a 479-residue protein sequence, read N- to C-terminus: Altronate oxidoreductase (479 aa).

Residue 18–29 (IIQFGEGNFLRA) coordinates NAD(+).

Belongs to the mannitol dehydrogenase family. UxaB subfamily.

It catalyses the reaction D-altronate + NAD(+) = keto-D-tagaturonate + NADH + H(+). It functions in the pathway carbohydrate metabolism; pentose and glucuronate interconversion. This Phocaeicola vulgatus (strain ATCC 8482 / DSM 1447 / JCM 5826 / CCUG 4940 / NBRC 14291 / NCTC 11154) (Bacteroides vulgatus) protein is Altronate oxidoreductase.